A 112-amino-acid polypeptide reads, in one-letter code: Iron-sulfur cluster assembly protein CyaY (112 aa).

The protein belongs to the frataxin family.

Functionally, involved in iron-sulfur (Fe-S) cluster assembly. May act as a regulator of Fe-S biogenesis. In Herminiimonas arsenicoxydans, this protein is Iron-sulfur cluster assembly protein CyaY.